A 726-amino-acid polypeptide reads, in one-letter code: Tripartite terminase subunit 1 (726 aa).

The C3H1-type zinc finger occupies 189 to 217 (CMKCYEELTLTPNQGKSLRKRLHGKFCNH). Residue 626–633 (YNDVFGKR) coordinates ATP.

The protein belongs to the herpesviridae TRM1 protein family. Associates with TRM2 and TRM3 to form the tripartite terminase complex. Interacts with portal protein.

Its subcellular location is the host nucleus. Component of the molecular motor that translocates viral genomic DNA in empty capsid during DNA packaging. Forms a tripartite terminase complex together with TRM2 and TRM3 in the host cytoplasm. Once the complex reaches the host nucleus, it interacts with the capsid portal vertex. This portal forms a ring in which genomic DNA is translocated into the capsid. TRM1 carries an endonuclease activity that plays an important role for the cleavage of concatemeric viral DNA into unit length genomes. The polypeptide is Tripartite terminase subunit 1 (Human herpesvirus 6B (strain Z29) (HHV-6 variant B)).